The sequence spans 551 residues: MELANICNATIAKGIAVQKDSYGGYGVYIVDPGALVGCNDPKLGGDKIELLRVSSVFNVKNLMEAMNALEGEYAEDGQRAADMFKSIIGSSIEELSAVSETCLLVYFMMVIYLMGEQGYAVPMKISRYIDTVLLGTTVNNASNCIESMLIHYEHVALFHELDNNLQKLHKTLISKMPSKKNYSIELLRQIYSATVSRVLEIPQELHEENYMDNYVVTPSLVPILDYVNHGDKTSRNAYYDVDRRKGDIILYLDLTVVNPGKLKPNTEVLITYKDIEDSLAMITKYGFDPANYTTTGTKIFSCTFDKMYLSTNKFDNEIDIRNFYQWFSINPSLQFVLNSENEWLINDSLAEFERLLVPFATSSQRNEHYWIYSDGDDARKRFMEYFDIDEVEDEDEAWAQLETQFKWFESSENDLMPFPPCVWTVKSKFLKEKEATGYELEKVIQNKLENSRALYNETTNQFQAYLENYLDYRIDVLQEYSPEDTENENAVSQLIARELSVLLKIRDRINNNKSIFLNSEDKKYAKLPLLPTKNVERPPWLSEGDDDFDQD.

An SET domain is found at 46 to 273 (DKIELLRVSS…PNTEVLITYK (228 aa)). Positions 184–288 (IELLRQIYSA…LAMITKYGFD (105 aa)) are SET-like.

It belongs to the class V-like SAM-binding methyltransferase superfamily.

It is found in the cytoplasm. It localises to the cytosol. It carries out the reaction L-lysyl-[cytochrome c] + S-adenosyl-L-methionine = N(6)-methyl-L-lysyl-[cytochrome c] + S-adenosyl-L-homocysteine + H(+). Its function is as follows. Methyltransferase which mediates trimethylation of cytochrome c (CYC1). This is Cytochrome c lysine N-methyltransferase 1 (CTM1) from Candida glabrata (strain ATCC 2001 / BCRC 20586 / JCM 3761 / NBRC 0622 / NRRL Y-65 / CBS 138) (Yeast).